The sequence spans 391 residues: Formate-dependent phosphoribosylglycinamide formyltransferase (391 aa).

N(1)-(5-phospho-beta-D-ribosyl)glycinamide is bound by residues 18–19 and Glu-78; that span reads EL. ATP is bound by residues Arg-110, Lys-151, 156-161, 191-194, and Glu-199; these read SSGKGQ and EEFI. The region spanning 115–305 is the ATP-grasp domain; sequence ELAAQQLGVR…EFELHLRAIL (191 aa). Residues Glu-264 and Glu-276 each contribute to the Mg(2+) site. Residues Asp-283, Lys-353, and 360-361 each bind N(1)-(5-phospho-beta-D-ribosyl)glycinamide; that span reads RR.

Belongs to the PurK/PurT family. Homodimer.

It catalyses the reaction N(1)-(5-phospho-beta-D-ribosyl)glycinamide + formate + ATP = N(2)-formyl-N(1)-(5-phospho-beta-D-ribosyl)glycinamide + ADP + phosphate + H(+). It participates in purine metabolism; IMP biosynthesis via de novo pathway; N(2)-formyl-N(1)-(5-phospho-D-ribosyl)glycinamide from N(1)-(5-phospho-D-ribosyl)glycinamide (formate route): step 1/1. Functionally, involved in the de novo purine biosynthesis. Catalyzes the transfer of formate to 5-phospho-ribosyl-glycinamide (GAR), producing 5-phospho-ribosyl-N-formylglycinamide (FGAR). Formate is provided by PurU via hydrolysis of 10-formyl-tetrahydrofolate. The chain is Formate-dependent phosphoribosylglycinamide formyltransferase from Synechocystis sp. (strain ATCC 27184 / PCC 6803 / Kazusa).